The following is a 180-amino-acid chain: ATP-dependent protease subunit HslV (180 aa).

Residue threonine 5 is part of the active site. The Na(+) site is built by glycine 165, cysteine 168, and threonine 171.

The protein belongs to the peptidase T1B family. HslV subfamily. A double ring-shaped homohexamer of HslV is capped on each side by a ring-shaped HslU homohexamer. The assembly of the HslU/HslV complex is dependent on binding of ATP.

The protein resides in the cytoplasm. The catalysed reaction is ATP-dependent cleavage of peptide bonds with broad specificity.. Allosterically activated by HslU binding. In terms of biological role, protease subunit of a proteasome-like degradation complex believed to be a general protein degrading machinery. This Helicobacter hepaticus (strain ATCC 51449 / 3B1) protein is ATP-dependent protease subunit HslV.